The sequence spans 116 residues: Non-specific lipid-transfer protein AP10 (116 aa).

Positions 1–26 (MKGTSMGVAILAMIVMAQLMVHPSVA) are cleaved as a signal peptide. 4 cysteine pairs are disulfide-bonded: cysteine 29–cysteine 76, cysteine 39–cysteine 53, cysteine 54–cysteine 98, and cysteine 74–cysteine 112.

It belongs to the plant LTP family. In terms of tissue distribution, in germinating seeds, detected in the entire surface of the cotyledons, shoot meristem, inter-cotyledon space, primary xylem and immature vascular elements (at protein level). Expressed in seeds, but not the aerial parts of the plant.

Its subcellular location is the secreted. It localises to the extracellular space. The protein localises to the membrane. Plant non-specific lipid-transfer proteins transfer phospholipids as well as galactolipids across membranes. May play a role in wax or cutin deposition in the cell walls of expanding epidermal cells and certain secretory tissues. Permeabilizes the membrane of fungal spores, inhibits germination of the spores of the fungus F.solani at a concentration of 40 ug/ml. Inhibits the growth of F.solani with an IC(50) of 6.5 ug/ml, weakly inhibits the growth of the fungus A.alternata. Binds oleoyl-CoA. The polypeptide is Non-specific lipid-transfer protein AP10 (Helianthus annuus (Common sunflower)).